Reading from the N-terminus, the 394-residue chain is Phosphoglycerate kinase (394 aa).

Residues 21 to 23 (DFN), R36, 59 to 62 (HLGR), R118, and R151 contribute to the substrate site. S183 bears the Phosphoserine mark. An ATP-binding site is contributed by K201. T299 bears the Phosphothreonine mark. Residues E323 and 350–353 (GGDS) contribute to the ATP site.

Belongs to the phosphoglycerate kinase family. Monomer.

The protein resides in the cytoplasm. It catalyses the reaction (2R)-3-phosphoglycerate + ATP = (2R)-3-phospho-glyceroyl phosphate + ADP. It participates in carbohydrate degradation; glycolysis; pyruvate from D-glyceraldehyde 3-phosphate: step 2/5. This Geobacillus kaustophilus (strain HTA426) protein is Phosphoglycerate kinase.